The following is a 301-amino-acid chain: Acetylglutamate kinase (301 aa).

Substrate-binding positions include 68-69 (GG), Arg90, and Asn195.

Belongs to the acetylglutamate kinase family. ArgB subfamily.

Its subcellular location is the cytoplasm. It catalyses the reaction N-acetyl-L-glutamate + ATP = N-acetyl-L-glutamyl 5-phosphate + ADP. The protein operates within amino-acid biosynthesis; L-arginine biosynthesis; N(2)-acetyl-L-ornithine from L-glutamate: step 2/4. Catalyzes the ATP-dependent phosphorylation of N-acetyl-L-glutamate. This chain is Acetylglutamate kinase, found in Pseudomonas putida (strain ATCC 700007 / DSM 6899 / JCM 31910 / BCRC 17059 / LMG 24140 / F1).